We begin with the raw amino-acid sequence, 269 residues long: Formamidopyrimidine-DNA glycosylase (269 aa).

The Schiff-base intermediate with DNA role is filled by P2. Residue E3 is the Proton donor of the active site. The active-site Proton donor; for beta-elimination activity is the K57. DNA is bound by residues H90, R109, and K150. An FPG-type zinc finger spans residues 235 to 269 (QVYGRKGEPCRVCGTPIVATKHAQRATFYCRQCQK). R259 (proton donor; for delta-elimination activity) is an active-site residue.

Belongs to the FPG family. As to quaternary structure, monomer. Zn(2+) is required as a cofactor.

The enzyme catalyses Hydrolysis of DNA containing ring-opened 7-methylguanine residues, releasing 2,6-diamino-4-hydroxy-5-(N-methyl)formamidopyrimidine.. The catalysed reaction is 2'-deoxyribonucleotide-(2'-deoxyribose 5'-phosphate)-2'-deoxyribonucleotide-DNA = a 3'-end 2'-deoxyribonucleotide-(2,3-dehydro-2,3-deoxyribose 5'-phosphate)-DNA + a 5'-end 5'-phospho-2'-deoxyribonucleoside-DNA + H(+). Functionally, involved in base excision repair of DNA damaged by oxidation or by mutagenic agents. Acts as a DNA glycosylase that recognizes and removes damaged bases. Has a preference for oxidized purines, such as 7,8-dihydro-8-oxoguanine (8-oxoG). Has AP (apurinic/apyrimidinic) lyase activity and introduces nicks in the DNA strand. Cleaves the DNA backbone by beta-delta elimination to generate a single-strand break at the site of the removed base with both 3'- and 5'-phosphates. The chain is Formamidopyrimidine-DNA glycosylase from Escherichia coli (strain K12 / MC4100 / BW2952).